A 93-amino-acid polypeptide reads, in one-letter code: Large ribosomal subunit protein uL23 (93 aa).

The protein belongs to the universal ribosomal protein uL23 family. In terms of assembly, part of the 50S ribosomal subunit. Contacts protein L29, and trigger factor when it is bound to the ribosome.

One of the early assembly proteins it binds 23S rRNA. One of the proteins that surrounds the polypeptide exit tunnel on the outside of the ribosome. Forms the main docking site for trigger factor binding to the ribosome. The protein is Large ribosomal subunit protein uL23 of Helicobacter pylori (strain P12).